The sequence spans 508 residues: Maturase K (508 aa).

It belongs to the intron maturase 2 family. MatK subfamily.

The protein resides in the plastid. The protein localises to the chloroplast. Functionally, usually encoded in the trnK tRNA gene intron. Probably assists in splicing its own and other chloroplast group II introns. This Wolffia arrhiza (Rootless water-meal) protein is Maturase K.